The primary structure comprises 177 residues: Inner membrane-spanning protein YciB (177 aa).

5 helical membrane passes run 22–42 (IFIA…IHWI), 50–70 (ISLF…FFHN), 76–96 (WKIT…QFFT), 121–141 (FIWS…AYYF), and 149–169 (FKVF…SIYI).

Belongs to the YciB family.

It is found in the cell inner membrane. Its function is as follows. Plays a role in cell envelope biogenesis, maintenance of cell envelope integrity and membrane homeostasis. The chain is Inner membrane-spanning protein YciB from Buchnera aphidicola subsp. Acyrthosiphon pisum (strain 5A).